A 75-amino-acid polypeptide reads, in one-letter code: Putative UPF0377 protein YJL222W-A (75 aa).

It belongs to the UPF0377 family.

In Saccharomyces cerevisiae (strain ATCC 204508 / S288c) (Baker's yeast), this protein is Putative UPF0377 protein YJL222W-A.